Here is a 148-residue protein sequence, read N- to C-terminus: Aspartate 1-decarboxylase (148 aa).

Serine 25 acts as the Schiff-base intermediate with substrate; via pyruvic acid in catalysis. Position 25 is a pyruvic acid (Ser) (serine 25). Substrate is bound at residue threonine 57. Tyrosine 58 acts as the Proton donor in catalysis. 73-75 (GAA) contributes to the substrate binding site.

Belongs to the PanD family. As to quaternary structure, heterooctamer of four alpha and four beta subunits. Requires pyruvate as cofactor. Post-translationally, is synthesized initially as an inactive proenzyme, which is activated by self-cleavage at a specific serine bond to produce a beta-subunit with a hydroxyl group at its C-terminus and an alpha-subunit with a pyruvoyl group at its N-terminus.

Its subcellular location is the cytoplasm. The enzyme catalyses L-aspartate + H(+) = beta-alanine + CO2. Its pathway is cofactor biosynthesis; (R)-pantothenate biosynthesis; beta-alanine from L-aspartate: step 1/1. In terms of biological role, catalyzes the pyruvoyl-dependent decarboxylation of aspartate to produce beta-alanine. The protein is Aspartate 1-decarboxylase of Rhodococcus jostii (strain RHA1).